Consider the following 1066-residue polypeptide: E3 ubiquitin-protein ligase RNF31 (1066 aa).

Residues 1 to 479 (MPGDEERGFL…PEKQRQDKMR (479 aa)) form a polyubiquitin-binding region. The region spanning 70-141 (TLSTALNILE…SFPEGQEEPD (72 aa)) is the PUB domain. The disordered stretch occupies residues 251–287 (LRQALPGSHQTASLSSSLPASSQPRPPSSSLALGDSS). Positions 262-287 (ASLSSSLPASSQPRPPSSSLALGDSS) are enriched in low complexity. 2 RanBP2-type zinc fingers span residues 293–325 (PANACLPWHCLTCATLNEPWAVFCAVCSQPKGC) and 344–373 (ARDQWACQSCTFENEAAAVLCAICERPRLA). Phosphoserine is present on S377. The RanBP2-type 3 zinc-finger motif lies at 403 to 432 (QPQVWYCDHCTFCNSGPVWVCAMCNRTRDP). Positions 434 to 478 (PTQPALQSYPSSLEKGRPKPGSSQHLGSSLPASCGDPEKQRQDKM) are disordered. Residues 454–464 (GSSQHLGSSLP) are compositionally biased toward polar residues. The span at 469–478 (DPEKQRQDKM) shows a compositional bias: basic and acidic residues. The interval 557–610 (GNLDEAVEECVRARRRKVHELQSLGFGPKEGSLQALFQHGGDVARALTELQRQR) is interaction with RBCK1. A UBA domain is found at 558–609 (NLDEAVEECVRARRRKVHELQSLGFGPKEGSLQALFQHGGDVARALTELQRQ). Residues 689–923 (LAQECAVCGW…KSLHGHHPRD (235 aa)) are TRIAD supradomain. The Zn(2+) site is built by C693, C696, C711, C713, C716, C719, C738, C741, C793, C796, C811, C814, C819, C822, H830, C835, C865, and C868. The RING-type 1 zinc finger occupies 693-743 (CAVCGWALPRNRMQALISCECTICPECFRQHFTIALKEKHITDMVCPACGR). An IBR-type zinc finger spans residues 773 to 835 (ALFHKKLTEA…WEEQHRGRSC (63 aa)). Residues 865–895 (CPKCKFSYALARGGCMHFHCTQCRHQFCSGC) form an RING-type 2; atypical zinc finger. C879 is a catalytic residue. Zn(2+) contacts are provided by C884, C887, C892, C895, C910, and H919. The tract at residues 904 to 1066 (KCPDPNCKVK…LGQSIARRRK (163 aa)) is LDD domain.

This sequence belongs to the RBR family. Component of the LUBAC complex (linear ubiquitin chain assembly complex) which consists of SHARPIN, RBCK1 and RNF31. LUBAC has a MW of approximately 600 kDa suggesting a heteromultimeric assembly of its subunits. Associates with the TNF-R1 signaling complex (TNF-RSC) in a stimulation-dependent manner. Interacts (via the PUB domain) with OTULIN (via the PIM motif); the interaction is direct. Interacts (via the PUB domain) with VCP (via the PIM motif). Interacts (via the PUB domain) with SPATA2 (via the PIM motif); interaction is direct and bridges RNF31 and CYLD. Interacts with CYLD; the interaction is indirect and is mediated via SPATA2. Interacts with MUSK. Interacts with CARD11, promoting linear ubiquitination of BCL10. In terms of processing, autoubiquitinated. Interaction with OTULIN is required to suppress formation of 'Met-1'-linked polyubiquitin chains and prevent subsequent inactivation of the LUBAC complex. Post-translationally, cleaved by caspase during apoptosis. Widely expressed (at protein level). Not expressed in heart.

The protein localises to the cytoplasm. It catalyses the reaction [E2 ubiquitin-conjugating enzyme]-S-ubiquitinyl-L-cysteine + [acceptor protein]-L-lysine = [E2 ubiquitin-conjugating enzyme]-L-cysteine + [acceptor protein]-N(6)-ubiquitinyl-L-lysine.. The protein operates within protein modification; protein ubiquitination. Its function is as follows. E3 ubiquitin-protein ligase component of the LUBAC complex which conjugates linear ('Met-1'-linked) polyubiquitin chains to substrates and plays a key role in NF-kappa-B activation and regulation of inflammation. LUBAC conjugates linear polyubiquitin to IKBKG and RIPK1 and is involved in activation of the canonical NF-kappa-B and the JNK signaling pathways. Linear ubiquitination mediated by the LUBAC complex interferes with TNF-induced cell death and thereby prevents inflammation. LUBAC is recruited to the TNF-R1 signaling complex (TNF-RSC) following polyubiquitination of TNF-RSC components by BIRC2 and/or BIRC3 and to conjugate linear polyubiquitin to IKBKG and possibly other components contributing to the stability of the complex. The LUBAC complex is also involved in innate immunity by conjugating linear polyubiquitin chains at the surface of bacteria invading the cytosol to form the ubiquitin coat surrounding bacteria. LUBAC is not able to initiate formation of the bacterial ubiquitin coat, and can only promote formation of linear polyubiquitins on pre-existing ubiquitin. Recruited to the surface of bacteria by RNF213, which initiates the bacterial ubiquitin coat. The bacterial ubiquitin coat acts as an 'eat-me' signal for xenophagy and promotes NF-kappa-B activation. Together with OTULIN, the LUBAC complex regulates the canonical Wnt signaling during angiogenesis. RNF31 is required for linear ubiquitination of BCL10, thereby promoting TCR-induced NF-kappa-B activation. Binds polyubiquitin of different linkage types. This Mus musculus (Mouse) protein is E3 ubiquitin-protein ligase RNF31.